The sequence spans 352 residues: Schlafen-like protein 4 (352 aa).

An SLFN-like fold region spans residues 87–235 (FEYQSNFSEV…SDKVYQISSG (149 aa)). The helical transmembrane segment at 326–343 (IQNIGWIFFGTALSCCIY) threads the bilayer.

Belongs to the Schlafen family. Component of the PUCH (precursor of 21U RNA 5'-end cleavage holoenzyme) complex; consisting of tofu-1, tofu-2 and either slfl-3 or slfl-4.

The protein localises to the membrane. Functionally, component of the trimeric PUCH (precursor of 21U RNA 5'-end cleavage holoenzyme) complex, that acts as an endoribonuclease processing the 5'-end of precursor Piwi-interacting RNAs (piRNAs). The PUCH complex consists of tofu-1, tofu-2 and either slfl-3 or slfl-4, where tofu-2 exhibits endoribonuclease activity. PUCH-mediated processing strictly requires a 7-methyl-G cap (m7 G-cap) and an uracil at position three (U3). PUCH also exhibits a strict bias for piRNA precursors with an A or G at position 1. Mature piRNA production is enhanced by the interaction of PUCH with the PETISCO complex, which is stabilizing piRNA precursors and allows their processing by PUCH. This is Schlafen-like protein 4 from Caenorhabditis elegans.